An 83-amino-acid polypeptide reads, in one-letter code: uncharacterized protein (83 aa).

This is an uncharacterized protein from Dictyostelium discoideum (Social amoeba).